The sequence spans 254 residues: 5-keto-D-gluconate 5-reductase (254 aa).

NADP(+) is bound at residue 13 to 37; that stretch reads LITGSAQGIGFLLATGLGKYGAQII. S145 lines the substrate pocket. Y158 acts as the Proton acceptor in catalysis.

The protein belongs to the short-chain dehydrogenases/reductases (SDR) family.

The catalysed reaction is D-gluconate + NAD(+) = 5-dehydro-D-gluconate + NADH + H(+). It catalyses the reaction D-gluconate + NADP(+) = 5-dehydro-D-gluconate + NADPH + H(+). It functions in the pathway carbohydrate acid metabolism; L-idonate degradation. Functionally, catalyzes the reduction of 5-keto-D-gluconate to D-gluconate, using either NADH or NADPH. Is likely involved in an L-idonate degradation pathway that allows E.coli to utilize L-idonate as the sole carbon and energy source. Is also able to catalyze the reverse reaction in vitro, but the D-gluconate oxidation by the enzyme can only proceed with NAD. The sequence is that of 5-keto-D-gluconate 5-reductase from Escherichia coli O6:H1 (strain CFT073 / ATCC 700928 / UPEC).